Consider the following 1383-residue polypeptide: Negative regulator of sporulation MDS3 (1383 aa).

Kelch repeat units follow at residues C124 to F179, G199 to E246, and Q356 to F402. The segment covering G450–V460 has biased composition (polar residues). Disordered stretches follow at residues G450–A506, N625–K644, L653–S825, L858–S884, N1063–E1114, Q1251–Q1289, and S1321–S1369. The segment covering K631–K644 has biased composition (low complexity). Residues V693 to T707 are compositionally biased toward basic and acidic residues. Low complexity-rich tracts occupy residues N726–P758, E803–G815, and L858–V874. Over residues E1084 to K1094 the composition is skewed to basic and acidic residues. Over residues Q1251–S1280 the composition is skewed to low complexity. A compositionally biased stretch (polar residues) spans L1341 to N1352.

As to quaternary structure, interacts with SIT4.

Its subcellular location is the cytoplasm. In terms of biological role, negatively regulates early sporulation-specific genes. TOR signaling pathway component that contributes to morphogenesis as a regulator of this key morphogenetic pathway. Required for growth and hyphal formation at pH 9, for full virulence in a mouse model of systemic infection and for biofilm formation. Involved in chlamydospore formation, distinctive morphological feature of the fungal pathogen C.albicans that can be induced to form in oxygen-limited environments and has been reported in clinical specimens. This chain is Negative regulator of sporulation MDS3 (MDS3), found in Candida albicans (strain SC5314 / ATCC MYA-2876) (Yeast).